The primary structure comprises 126 residues: Large ribosomal subunit protein uL22 (126 aa).

It belongs to the universal ribosomal protein uL22 family. Part of the 50S ribosomal subunit.

This protein binds specifically to 23S rRNA; its binding is stimulated by other ribosomal proteins, e.g. L4, L17, and L20. It is important during the early stages of 50S assembly. It makes multiple contacts with different domains of the 23S rRNA in the assembled 50S subunit and ribosome. Its function is as follows. The globular domain of the protein is located near the polypeptide exit tunnel on the outside of the subunit, while an extended beta-hairpin is found that lines the wall of the exit tunnel in the center of the 70S ribosome. In Ruegeria sp. (strain TM1040) (Silicibacter sp.), this protein is Large ribosomal subunit protein uL22.